Reading from the N-terminus, the 74-residue chain is Delta-stichotoxin-Sgt2a (74 aa).

The first 19 residues, 1–19, serve as a signal peptide directing secretion; the sequence is MNRLIILVFAAVFLTLASA. Positions 20–28 are excised as a propeptide; sequence EVSEDVNMA. Intrachain disulfides connect C34/C71, C36/C64, and C57/C72.

It belongs to the sea anemone sodium channel inhibitory toxin family. Type I subfamily.

It is found in the secreted. The protein localises to the nematocyst. Functionally, binds specifically to voltage-gated sodium channels (Nav), thereby delaying their inactivation during signal transduction. This Stichodactyla gigantea (Giant carpet anemone) protein is Delta-stichotoxin-Sgt2a.